A 227-amino-acid chain; its full sequence is Cytochrome c biogenesis ATP-binding export protein CcmA (227 aa).

Residues 26-227 form the ABC transporter domain; the sequence is LAASGLGFSR…ARTLRLDARS (202 aa). An ATP-binding site is contributed by 58–65; the sequence is GANGSGKT.

This sequence belongs to the ABC transporter superfamily. CcmA exporter (TC 3.A.1.107) family. In terms of assembly, the complex is composed of two ATP-binding proteins (CcmA) and two transmembrane proteins (CcmB).

It is found in the cell inner membrane. It carries out the reaction heme b(in) + ATP + H2O = heme b(out) + ADP + phosphate + H(+). In terms of biological role, part of the ABC transporter complex CcmAB involved in the biogenesis of c-type cytochromes; once thought to export heme, this seems not to be the case, but its exact role is uncertain. Responsible for energy coupling to the transport system. This chain is Cytochrome c biogenesis ATP-binding export protein CcmA, found in Cupriavidus necator (strain ATCC 17699 / DSM 428 / KCTC 22496 / NCIMB 10442 / H16 / Stanier 337) (Ralstonia eutropha).